Here is an 876-residue protein sequence, read N- to C-terminus: Alanine--tRNA ligase (876 aa).

Zn(2+) is bound by residues His562, His566, Cys666, and His670.

This sequence belongs to the class-II aminoacyl-tRNA synthetase family. Requires Zn(2+) as cofactor.

Its subcellular location is the cytoplasm. The enzyme catalyses tRNA(Ala) + L-alanine + ATP = L-alanyl-tRNA(Ala) + AMP + diphosphate. Its function is as follows. Catalyzes the attachment of alanine to tRNA(Ala) in a two-step reaction: alanine is first activated by ATP to form Ala-AMP and then transferred to the acceptor end of tRNA(Ala). Also edits incorrectly charged Ser-tRNA(Ala) and Gly-tRNA(Ala) via its editing domain. The protein is Alanine--tRNA ligase of Hahella chejuensis (strain KCTC 2396).